The sequence spans 434 residues: 3-ketoacyl-CoA thiolase A, peroxisomal (434 aa).

A peroxisome-targeting transit peptide spans M1–C36. Residues M11 to C36 are PTS2-type peroxisomal targeting signal. The active-site Acyl-thioester intermediate is the C133. N6-acetyllysine is present on residues K183 and K244. Catalysis depends on proton acceptor residues H387 and C418.

Belongs to the thiolase-like superfamily. Thiolase family. Homodimer. Interacts (via PTS2-type peroxisomal targeting signal region) with PEX7; leading to its translocation into peroxisomes.

The protein resides in the peroxisome. It carries out the reaction an acyl-CoA + acetyl-CoA = a 3-oxoacyl-CoA + CoA. The enzyme catalyses 2 acetyl-CoA = acetoacetyl-CoA + CoA. The catalysed reaction is tetradecanoyl-CoA + acetyl-CoA = 3-oxohexadecanoyl-CoA + CoA. It catalyses the reaction hexanoyl-CoA + acetyl-CoA = 3-oxooctanoyl-CoA + CoA. It carries out the reaction 3-oxohexadecanedioyl-CoA + CoA = tetradecanedioyl-CoA + acetyl-CoA. The enzyme catalyses 3-oxo-(6Z,9Z,12Z,15Z,18Z,21Z)-tetracosahexaenoyl-CoA + CoA = (4Z,7Z,10Z,13Z,16Z,19Z)-docosahexaenoyl-CoA + acetyl-CoA. Its pathway is lipid metabolism; peroxisomal fatty acid beta-oxidation. In terms of biological role, responsible for the thiolytic cleavage of straight chain 3-keto fatty acyl-CoAs (3-oxoacyl-CoAs). Plays an important role in fatty acid peroxisomal beta-oxidation. Catalyzes the cleavage of short, medium, long, and very long straight chain 3-oxoacyl-CoAs. Medium chain straight 3-oxoacyl-CoAs are preferred substrates. This chain is 3-ketoacyl-CoA thiolase A, peroxisomal, found in Rattus norvegicus (Rat).